A 530-amino-acid polypeptide reads, in one-letter code: Autoinducer-2 kinase (530 aa).

This sequence belongs to the FGGY kinase family.

It localises to the cytoplasm. It carries out the reaction (S)-4,5-dihydroxypentane-2,3-dione + ATP = (2S)-2-hydroxy-3,4-dioxopentyl phosphate + ADP + H(+). Functionally, catalyzes the phosphorylation of autoinducer-2 (AI-2) to phospho-AI-2, which subsequently inactivates the transcriptional regulator LsrR and leads to the transcription of the lsr operon. Phosphorylates the ring-open form of (S)-4,5-dihydroxypentane-2,3-dione (DPD), which is the precursor to all AI-2 signaling molecules, at the C5 position. This Yersinia pestis bv. Antiqua (strain Antiqua) protein is Autoinducer-2 kinase.